The primary structure comprises 251 residues: uncharacterized protein (251 aa).

The signal sequence occupies residues 1 to 25 (MSAGRLNKKSLGIVMLLSVGLLLAG). Residue cysteine 26 is the site of N-palmitoyl cysteine attachment. Cysteine 26 is lipidated: S-diacylglycerol cysteine. One can recognise a LysM domain in the interval 40–84 (SVYTVKRGDTLYRISRTTGTSVKELARLNGISPPYTIEVGQKLKL). A compositionally biased stretch (low complexity) spans 93–112 (TRKSTAKSTTKTASVTPSSA). The interval 93–115 (TRKSTAKSTTKTASVTPSSAVPK) is disordered.

It belongs to the peptidase M23B family.

It is found in the cell inner membrane. This is an uncharacterized protein from Escherichia coli (strain K12).